Here is a 179-residue protein sequence, read N- to C-terminus: Gamma-glutamyl cyclotransferase verK (179 aa).

The protein belongs to the class-I pyridoxal-phosphate-dependent aminotransferase family.

It carries out the reaction an alpha-(gamma-L-glutamyl)-L-amino acid = 5-oxo-L-proline + an L-alpha-amino acid. It functions in the pathway mycotoxin biosynthesis. In terms of biological role, gamma-glutamyl cyclotransferase; part of the gene cluster that mediates the biosynthesis of 11'-deoxyverticillin A, one of the dimeric epipolythiodioxopiperazines (ETPs) from the verticillin family that act as mycotoxins. 11'-deoxyverticillin A is required for normal conidiation. The nonribosomal peptide synthetase verP is speculated to be responsible for condensation of amino acids to form the carbon skeleton of verticillin, whereas the cluster-specific tailoring enzymes are involved in further modifications leading to the production of 11'-deoxyverticillin A. The chain is Gamma-glutamyl cyclotransferase verK from Clonostachys rogersoniana.